Here is a 106-residue protein sequence, read N- to C-terminus: MIVTTTPNIEGKRIVRYCGVIAGEAILGANIFKDLFAGIRDIVGGRSGTYERELEKARAIALEELQQHAVALGANAVVGIDLDYETFGKANGMLMVSVSGTAVVVE.

The protein belongs to the UPF0145 family.

The polypeptide is UPF0145 protein VCM66_A0911 (Vibrio cholerae serotype O1 (strain M66-2)).